A 255-amino-acid chain; its full sequence is tRNA (guanine-N(1)-)-methyltransferase (255 aa).

S-adenosyl-L-methionine contacts are provided by residues Gly-117 and 137 to 142; that span reads LGDFVL.

It belongs to the RNA methyltransferase TrmD family. Homodimer.

The protein localises to the cytoplasm. It catalyses the reaction guanosine(37) in tRNA + S-adenosyl-L-methionine = N(1)-methylguanosine(37) in tRNA + S-adenosyl-L-homocysteine + H(+). Functionally, specifically methylates guanosine-37 in various tRNAs. In Paracidovorax citrulli (strain AAC00-1) (Acidovorax citrulli), this protein is tRNA (guanine-N(1)-)-methyltransferase.